Reading from the N-terminus, the 143-residue chain is Transcriptional regulator MraZ (143 aa).

2 SpoVT-AbrB domains span residues 5–47 (EYDH…TLDE) and 76–119 (AVEV…DRET).

Belongs to the MraZ family. In terms of assembly, forms oligomers.

It localises to the cytoplasm. Its subcellular location is the nucleoid. This chain is Transcriptional regulator MraZ, found in Staphylococcus aureus (strain Mu3 / ATCC 700698).